Here is a 350-residue protein sequence, read N- to C-terminus: Nicotinate-nucleotide--dimethylbenzimidazole phosphoribosyltransferase (350 aa).

The active-site Proton acceptor is Glu317.

The protein belongs to the CobT family.

It catalyses the reaction 5,6-dimethylbenzimidazole + nicotinate beta-D-ribonucleotide = alpha-ribazole 5'-phosphate + nicotinate + H(+). Its pathway is nucleoside biosynthesis; alpha-ribazole biosynthesis; alpha-ribazole from 5,6-dimethylbenzimidazole: step 1/2. In terms of biological role, catalyzes the synthesis of alpha-ribazole-5'-phosphate from nicotinate mononucleotide (NAMN) and 5,6-dimethylbenzimidazole (DMB). The protein is Nicotinate-nucleotide--dimethylbenzimidazole phosphoribosyltransferase of Shewanella putrefaciens (strain CN-32 / ATCC BAA-453).